The chain runs to 697 residues: Probable translocation protein y4yR (697 aa).

8 helical membrane passes run 20 to 40, 42 to 62, 67 to 87, 107 to 127, 200 to 220, 235 to 255, 293 to 313, and 372 to 392; these read VALMLLLAVSMMVMPIPVMAV, ALIGFNMGLAVLLLMAALYVS, FSSLPGVILLSTVFRLALTVA, SFVISGNIVVGFVIFLVVTMV, SIAGLVVICINMLGGISIGLL, LLTIGDALISQIPALLLSITA, VAMGFVPGFPLPVFFMLAAVF, and IARISQLVSADLGIIVPPIPV. The disordered stretch occupies residues 675–697; that stretch reads IRLPPSNGTSGEPRSIRPSATTG. The segment covering 680 to 697 has biased composition (polar residues); it reads SNGTSGEPRSIRPSATTG.

This sequence belongs to the FHIPEP (flagella/HR/invasion proteins export pore) family.

It localises to the cell inner membrane. Could be involved in the secretion of an unknown factor. The protein is Probable translocation protein y4yR of Sinorhizobium fredii (strain NBRC 101917 / NGR234).